The primary structure comprises 87 residues: Translation initiation factor IF-1 2 (87 aa).

In terms of domain architecture, S1-like spans 1-72 (MAKEELLELD…TKGRINFRHK (72 aa)).

Belongs to the IF-1 family. Component of the 30S ribosomal translation pre-initiation complex which assembles on the 30S ribosome in the order IF-2 and IF-3, IF-1 and N-formylmethionyl-tRNA(fMet); mRNA recruitment can occur at any time during PIC assembly.

The protein localises to the cytoplasm. One of the essential components for the initiation of protein synthesis. Stabilizes the binding of IF-2 and IF-3 on the 30S subunit to which N-formylmethionyl-tRNA(fMet) subsequently binds. Helps modulate mRNA selection, yielding the 30S pre-initiation complex (PIC). Upon addition of the 50S ribosomal subunit IF-1, IF-2 and IF-3 are released leaving the mature 70S translation initiation complex. This chain is Translation initiation factor IF-1 2, found in Burkholderia vietnamiensis (strain G4 / LMG 22486) (Burkholderia cepacia (strain R1808)).